Reading from the N-terminus, the 426-residue chain is Divalent metal cation transporter MntH (426 aa).

Transmembrane regions (helical) follow at residues 31–51 (WYLL…GNVA), 58–78 (AQFG…AGLV), 134–156 (ILFR…LLLM), 169–189 (VITG…FVAT), 208–228 (SVLL…VYLH), 256–276 (VILA…VAAI), 298–318 (LGAT…LASA), 337–357 (IPML…LALG), 363–383 (ALVL…LPLV), and 402–422 (TVLG…LIYL).

Belongs to the NRAMP family.

The protein localises to the cell membrane. Functionally, h(+)-stimulated, divalent metal cation uptake system. The sequence is that of Divalent metal cation transporter MntH from Mycobacterium leprae (strain TN).